A 1876-amino-acid chain; its full sequence is MTGSISGEADLRHWLIDYLVTNIGCTPDEVDPDLSLADLGVSSRDAVVLSGELSELLGRTVSPIDFWEHPTINALAAYLAAPEPSPDSDAAVKRGARNSLDEPIAVVGMGCRFPGGISCPEALWDFLCERRSSISQVPPQRWQPFEGGPPEVAAALARTTRWGSFLPDIDAFDAEFFEISPSEADKMDPQQRLLLEVAWEALEHAGIPPGTLRRSATGVFAGACLSEYGAMASADLSQVDGWSNSGGAMSIIANRLSYFLDLRGPSVAVDTACSSSLVAIHLACQSLRTQDCHLAIAAGVNLLLSPAVFRGFDQVGALSPTGQCRAFDATADGFVRGEGAGVVVLKRLTDAQRDGDRVLAVICGSAVNQDGRSNGLMAPNPAAQMAVLRAAYTNAGMQPSEVDYVEAHGTGTLLGDPIEARALGTVLGRGRPEDSPLLIGSVKTNLGHTEAAAGIAGFIKTVLAVQHGQIPPNQHFETANPHIPFTDLRMKVVDTQTEWPATGHPRRAGVSSFGFGGTNAHVVIEQGQEVRPAPGQGLSPAVSTLVVAGKTMQRVSATAGMLADWMEGPGADVALADVAHTLNHHRSRQPKFGTVVARDRTQAIAGLRALAAGQHAPGVVNPADGSPGPGTVFVYSGRGSQWAGMGRQLLADEPAFAAAVAELEPVFVEQAGFSLHDVLANGEELVGIEQIQLGLIGMQLALTELWCSYGVRPDLVIGHSMGEVAAAVVAGALTPAEGLRVTATRSRLMAPLSGQGGMALLELDAPTTEALIADFPQVTLGIYNSPRQTVIAGPTEQIDELIARVRAQNRFASRVNIEVAPHNPAMDALQPAMRSELADLTPRTPTIGIISTTYADLHTQPVFDAEHWATNMRNPVRFQQAIASAGSGADGAYHTFIEISAHPLLTQAIIDTLHSAQPGARYTSLGTLQRDTDDVVTFRTNLNKAHTIHPPHTPHPPEPHPPIPTTPWQHTRHWITTKYPAGSVGSAPRAGTLLGQHTTVATVSASPPSHLWQARLAPDAKPYQGGHRFHQVEVVPASVVLHTILSAATELGYSALSEVRFEQPIFADRPRLIQVVADNRAISLASSPAAGTPSDRWTRHVTAQLSSSPSDSASSLNEHHRANGQPPERAHRDLIPDLAELLAMRGIDGLPFSWTVASWTQHSSNLTVAIDLPEALPEGSTGPLLDAAVHLAALSDVADSRLYVPASIEQISLGDVVTGPRSSVTLNRTAHDDDGITVDVTVAAHGEVPSLSMRSLRYRALDFGLDVGRAQPPASTGPVEAYCDATNFVHTIDWQPQTVPDATHPGAEQVTHPGPVAIIGDDGAALCETLEGAGYQPAVMSDGVSQARYVVYVADSDPAGADETDVDFAVRICTEITGLVRTLAERDADKPAALWILTRGVHESVAPSALRQSFLWGLAGVIAAEHPELWGGLVDLAINDDLGEFGPALAELLAKPSKSILVRRDGVVLAPALAPVRGEPARKSLQCRPDAAYLITGGLGALGLLMADWLADRGAHRLVLTGRTPLPPRRDWQLDTLDTELRRRIDAIRALEMRGVTVEAVAADVGCREDVQALLAARDRDGAAPIRGIIHAAGITNDQLVTSMTGDAVRQVMWPKIGGSQVLHDAFPPGSVDFFYLTASAAGIFGIPGQGSYAAANSYLDALARARRQQGCHTMSLDWVAWRGLGLAADAQLVSEELARMGSRDITPSEAFTAWEFVDGYDVAQAVVVPMPAPAGADGSGANAYLLPARNWSVMAATEVRSELEQGLRRIIAAELRVPEKELDTDRPFAELGLNSLMAMAIRREAEQFVGIELSATMLFNHPTVKSLASYLAKRVAPHDVSQDNQISALSSSAGSVLDSLFDRIESAPPEAERSV.

Thr-2 is modified (N-acetylthreonine). Positions 9–83 (ADLRHWLIDY…ALAAYLAAPE (75 aa)) constitute a Carrier 1 domain. Ser-43 is subject to O-(pantetheine 4'-phosphoryl)serine. Residues 101-526 (DEPIAVVGMG…GTNAHVVIEQ (426 aa)) form the Ketosynthase family 3 (KS3) domain. Residues Cys-273, His-408, and His-448 each act as for beta-ketoacyl synthase activity in the active site. Residues 626 to 950 (SPGPGTVFVY…NLNKAHTIHP (325 aa)) are acyltransferase. Residue Ser-720 is the For malonyltransferase activity of the active site. The interval 997–1112 (HTTVATVSAS…AQLSSSPSDS (116 aa)) is N-terminal hotdog fold. The PKS/mFAS DH domain occupies 997–1267 (HTTVATVSAS…YRALDFGLDV (271 aa)). The Proton acceptor; for dehydratase activity role is filled by His-1027. Residues 1102–1130 (TAQLSSSPSDSASSLNEHHRANGQPPERA) form a disordered region. Residues 1106–1115 (SSSPSDSASS) show a composition bias toward low complexity. The tract at residues 1130–1267 (AHRDLIPDLA…YRALDFGLDV (138 aa)) is C-terminal hotdog fold. Residue Asp-1186 is the Proton donor; for dehydratase activity of the active site. NADP(+) is bound at residue 1491 to 1551 (AAYLITGGLG…RRRIDAIRAL (61 aa)). The beta-ketoacyl reductase stretch occupies residues 1491–1728 (AAYLITGGLG…DGYDVAQAVV (238 aa)). The region spanning 1759-1836 (EVRSELEQGL…SLASYLAKRV (78 aa)) is the Carrier 2 domain. The residue at position 1796 (Ser-1796) is an O-(pantetheine 4'-phosphoryl)serine.

NADP(+) serves as cofactor. Pantetheine 4'-phosphate is required as a cofactor.

The enzyme catalyses icosanoyl-[(phenol)carboxyphthiodiolenone synthase] + 2 (S)-methylmalonyl-CoA + 3 malonyl-CoA + 5 NADPH + 10 H(+) = C32-carboxyphthiodiolenone-[(phenol)carboxyphthiodiolenone synthase] + 5 CO2 + 5 NADP(+) + 5 CoA + 2 H2O. It catalyses the reaction docosanoyl-[(phenol)carboxyphthiodiolenone synthase] + 2 (S)-methylmalonyl-CoA + 3 malonyl-CoA + 5 NADPH + 10 H(+) = C34-carboxyphthiodiolenone-[(phenol)carboxyphthiodiolenone synthase] + 5 CO2 + 5 NADP(+) + 5 CoA + 2 H2O. The catalysed reaction is 17-(4-hydroxyphenyl)heptadecanoyl-[(phenol)carboxyphthiodiolenone synthase] + 2 (S)-methylmalonyl-CoA + 3 malonyl-CoA + 5 NADPH + 10 H(+) = C35-(phenol)carboxyphthiodiolenone-[(phenol)carboxyphthiodiolenone synthase] + 5 CO2 + 5 NADP(+) + 5 CoA + 2 H2O. It carries out the reaction 19-(4-hydroxyphenyl)nonadecanoyl-[(phenol)carboxyphthiodiolenone synthase] + 2 (S)-methylmalonyl-CoA + 3 malonyl-CoA + 5 NADPH + 10 H(+) = C37-(phenol)carboxyphthiodiolenone-[(phenol)carboxyphthiodiolenone synthase] + 5 CO2 + 5 NADP(+) + 5 CoA + 2 H2O. Its pathway is lipid metabolism; fatty acid biosynthesis. Functionally, part of the PpsABCDE complex involved in the biosynthesis of the lipid core common to phthiocerols and phenolphthiocerols by successive additions of malonyl-CoA or methylmalonyl-CoA extender units. PpsA can accept as substrate the activated forms of either icosanoyl (C20), docosanoyl (C22) or lignoceroyl (C24) groups from FadD26, or a (4-hydroxyphenyl)-C17 or (4-hydroxyphenyl)-C19 fatty acyl from FadD29. PpsA initiates the biosynthesis and extends its substrate using a malonyl-CoA extender unit. The PpsB and PpsC proteins add the second and third malonyl-CoA extender units. PpsD adds an (R)-methylmalonyl unit and PpsE adds a second (R)-methylmalonyl unit. The incorporation of the methylmalonyl units results in formation of two branched methyl groups in the elongated product. The chain is Phenolphthiocerol/phthiocerol polyketide synthase subunit A (ppsA) from Mycobacterium tuberculosis (strain ATCC 25618 / H37Rv).